A 287-amino-acid polypeptide reads, in one-letter code: Flagellin (287 aa).

This sequence belongs to the bacterial flagellin family.

It localises to the secreted. The protein localises to the bacterial flagellum. In terms of biological role, flagellin is the subunit protein which polymerizes to form the filaments of bacterial flagella. In Listeria monocytogenes serovar 1/2a (strain ATCC BAA-679 / EGD-e), this protein is Flagellin (flaA).